Here is a 576-residue protein sequence, read N- to C-terminus: (E,E)-alpha-farnesene synthase (576 aa).

Residues R289, D326, D330, R468, and N471 each coordinate (2E,6E)-farnesyl diphosphate. Mg(2+) is bound by residues D326 and D330. A DDXXD motif motif is present at residues 326–330 (DDVYD). Mg(2+) is bound by residues N471, T475, and E479. K(+) is bound by residues D484 and S487.

The protein belongs to the terpene synthase family. Tpsb subfamily. As to quaternary structure, monomer. Requires Mg(2+) as cofactor. Mn(2+) serves as cofactor. It depends on K(+) as a cofactor.

The protein resides in the cytoplasm. It carries out the reaction (2E,6E)-farnesyl diphosphate = (3E,6E)-alpha-farnesene + diphosphate. In terms of biological role, sesquiterpene synthase catalyzing the production of (E,E)-alpha-farnesene, the predominant terpene produced during storage of fruits. Produces all six isomers (E,E)-alpha-farnesene, (Z,E)-alpha-farnesene, (E,Z)-alpha-farnesene, (Z,Z)-alpha-farnesene, (E)-beta-farnesene and (Z)-beta-farnesene from a mix of isomeric forms of the farnesyl diphosphate precursor. Able to convert geranyl diphosphate to the monoterpenes (E)-beta-ocimene, linalool and beta-myrcene. Also has a prenyltransferase activity producing alpha-farnesene directly from geranyl diphosphate and isoprenyl diphosphate. This Malus domestica (Apple) protein is (E,E)-alpha-farnesene synthase (AFS1).